The primary structure comprises 972 residues: Fibroblast growth factor receptor (972 aa).

The signal sequence occupies residues 1–43 (MSLPRCPRTRTVMFSRTLTRCYPQRTLWIAILCVICSWTLSTA). The Extracellular segment spans residues 44 to 547 (GATTIRDKEV…NNMQPTSKTQ (504 aa)). Residues 57–152 (APQDLTAIPV…YIEASGTPPI (96 aa)) enclose the Fibronectin type-III domain. N-linked (GlcNAc...) asparagine glycans are attached at residues N109, N121, N191, N203, N239, N272, N315, N390, N398, N419, N422, and N460. Residues 150-242 (PPIPPTLRRN…GQPIHVNFTL (93 aa)) form the Ig-like C2-type 1 domain. Residues C176 and C226 are joined by a disulfide bond. 2 consecutive Ig-like C2-type domains span residues 282-374 (PRFT…YDVK) and 383-517 (PIMS…AYLD). Residues C306 and C358 are joined by a disulfide bond. C403 and C501 are joined by a disulfide. Residues 548 to 568 (LIIFSVVGFVVVLILVTCIAI) form a helical membrane-spanning segment. The Cytoplasmic segment spans residues 569–972 (LCKQTQVRHR…QTRDCCPYAN (404 aa)). One can recognise a Protein kinase domain in the interval 639 to 925 (LTVGKTIGEG…ISVSSNQDYL (287 aa)). ATP is bound by residues 645–653 (IGEGAFGKV) and K673. The active-site Proton acceptor is D781. Phosphotyrosine; by autocatalysis is present on Y812.

Belongs to the protein kinase superfamily. Tyr protein kinase family. Fibroblast growth factor receptor subfamily.

The protein localises to the membrane. The catalysed reaction is L-tyrosyl-[protein] + ATP = O-phospho-L-tyrosyl-[protein] + ADP + H(+). Functionally, receptor for basic fibroblast growth factor. In Strongylocentrotus purpuratus (Purple sea urchin), this protein is Fibroblast growth factor receptor (FGFR).